The following is a 372-amino-acid chain: Cyclic GMP-AMP synthase-like receptor (372 aa).

Threonine 68 lines the GTP pocket. Residues serine 70 and 82-84 (EFD) each bind ATP. Glutamate 82, aspartate 84, and aspartate 190 together coordinate Mg(2+). GTP-binding positions include aspartate 190 and 236–243 (LVCAPYWE). ATP-binding positions include 240 to 243 (PYWE), lysine 261, and 274 to 278 (SYTIK).

It belongs to the mab-21 family. It depends on Mg(2+) as a cofactor. Mn(2+) serves as cofactor.

The catalysed reaction is GTP + ATP = 3',2'-cGAMP + 2 diphosphate. The enzyme catalyses GTP + ATP = pppA(2'-5')pG + diphosphate. It carries out the reaction pppA(2'-5')pG = 3',2'-cGAMP + diphosphate. Its activity is regulated as follows. The enzyme activity is specifically activated by double-stranded RNA (dsRNA). In terms of biological role, nucleotidyltransferase that catalyzes the formation of cyclic GMP-AMP (3',2'-cGAMP) from ATP and GTP and plays a key role in innate immunity. Synthesizes 3',2'-cGAMP in a two-step reaction through production of the linear intermediate pppA(2'-5')pG. Acts as a key sensor of double-stranded RNA (dsRNA), the presence of dsRNA in the cytoplasm being a danger signal that triggers the immune responses. Directly binds dsRNA longer than 15 bp, activating the nucleotidyltransferase activity, leading to synthesis of 3',2'-cGAMP, a second messenger that binds to and activates Sting, thereby triggering the antiviral immune response via activation of the NF-kappa-B transcription factor Rel (Relish). This is Cyclic GMP-AMP synthase-like receptor from Drosophila eugracilis (Fruit fly).